We begin with the raw amino-acid sequence, 430 residues long: MAPSPEGVTVVLGAQWGDEGKGKLVDILAAEADICARCAGGNNAGHTIVVRNDKGEKTSYAFNLLPSGLINPECTAFIGSGVVVHVPSLFNELDTLERKGLKVAGRLFVSDRAHLVMGFHQIVDGLKEVELGGSSIGTTRKGIGPAYSSKASRSGLRVHHLFDPTFPAKFRKLVEGRFKRYGHFEFDTEGEIEMYLAFAERLRPFIVDGPTFMHNAVNSGKRVLVEGANALMLDLDYGTYPFVTSSSTSIGGVVSGLGISPFAIKRVVGVIKAYTTRVGGGPFPTEDLATVGETLQEVGAEYGTVTGRRRRCGWLDLVVMKYSTMINGYTSLNLTKLDVLDGFDEIKVATGYKIDGVEVEGFPADLDRLAKVEVQYATLPGWKTDISNCKTYEEFPENAKAYIKFIEDYLGVKVQYVGVGPGRDQNVIIF.

GTP-binding positions include 17–23 and 45–47; these read GDEGKGK and GHT. The Proton acceptor role is filled by aspartate 18. The Mg(2+) site is built by aspartate 18 and glycine 45. IMP is bound by residues 18–21, 43–46, threonine 139, arginine 153, asparagine 229, threonine 244, and arginine 308; these read DEGK and NAGH. Histidine 46 functions as the Proton donor in the catalytic mechanism. 304–310 contributes to the substrate binding site; that stretch reads TVTGRRR. Residues arginine 310, 336–338, and 418–420 contribute to the GTP site; these read KLD and GVG.

It belongs to the adenylosuccinate synthetase family. As to quaternary structure, homodimer. It depends on Mg(2+) as a cofactor.

Its subcellular location is the cytoplasm. It carries out the reaction IMP + L-aspartate + GTP = N(6)-(1,2-dicarboxyethyl)-AMP + GDP + phosphate + 2 H(+). The protein operates within purine metabolism; AMP biosynthesis via de novo pathway; AMP from IMP: step 1/2. Functionally, plays an important role in the de novo pathway and in the salvage pathway of purine nucleotide biosynthesis. Catalyzes the first committed step in the biosynthesis of AMP from IMP. This chain is Adenylosuccinate synthetase, found in Cryptococcus neoformans var. neoformans serotype D (strain JEC21 / ATCC MYA-565) (Filobasidiella neoformans).